The chain runs to 321 residues: tRNA dimethylallyltransferase (321 aa).

25–32 (GPTASGKS) provides a ligand contact to ATP. Substrate is bound at residue 27–32 (TASGKS). The tract at residues 50–53 (DSMQ) is interaction with substrate tRNA.

It belongs to the IPP transferase family. Monomer. It depends on Mg(2+) as a cofactor.

It carries out the reaction adenosine(37) in tRNA + dimethylallyl diphosphate = N(6)-dimethylallyladenosine(37) in tRNA + diphosphate. In terms of biological role, catalyzes the transfer of a dimethylallyl group onto the adenine at position 37 in tRNAs that read codons beginning with uridine, leading to the formation of N6-(dimethylallyl)adenosine (i(6)A). This Rhodopseudomonas palustris (strain ATCC BAA-98 / CGA009) protein is tRNA dimethylallyltransferase.